Reading from the N-terminus, the 452-residue chain is MCGVRRGMGVLLLFCAVALCAMPFVVRSVWGKVYIDIDSPAFQKIPIAVADFAPLNGNQGHADLSSWFPGAVRKTLDLTGYFNILNRTGGPRDQSQTGAVQAQAAYGEWRSLGAEYLIQGGFSSRGTQLVAEFRLIDIVQGRQLMGKQYTGGFEDRRDMVIRFVQEVLSLLTGGEGFFDTRIAFVVRQGRSSSLHTVGFGSQIDGRDLARVAGSPSLILSPRWSPDGRYLAFSSYRDGKPDIFVVSPSGSGLKKIVSFQGLNLPGAWSPDGRSLLLTLSKDGNEEIYVMDVRSGQVRRLTRNSAIDVSPVWSPDGRRIAFVSNISGSPQIYVMNADGGDVRRLTYSGNYNTTPAWSPRGGKIAYEGKVGSGYQIFSIDEDGGNVRQLTSGAGDHEFPSWSPDGRFLTFSLRSGGRSRINILNANTLEVRTLYESTDRCLGPAWSPRLKQALR.

The first 31 residues, 1 to 31 (MCGVRRGMGVLLLFCAVALCAMPFVVRSVWG), serve as a signal peptide directing secretion.

This sequence belongs to the TolB family. The Tol-Pal system is composed of five core proteins: the inner membrane proteins TolA, TolQ and TolR, the periplasmic protein TolB and the outer membrane protein Pal. They form a network linking the inner and outer membranes and the peptidoglycan layer.

It localises to the periplasm. Functionally, part of the Tol-Pal system, which plays a role in outer membrane invagination during cell division and is important for maintaining outer membrane integrity. This is Tol-Pal system protein TolB from Syntrophus aciditrophicus (strain SB).